The chain runs to 459 residues: WPP domain-interacting protein 3 (459 aa).

The segment covering 1–17 has biased composition (polar residues); that stretch reads MNESVPDSVEDNGNSVP. The interval 1–78 is disordered; that stretch reads MNESVPDSVE…GPVRDEAAPV (78 aa). Positions 52 to 66 are enriched in basic residues; the sequence is STRKGFGLKKWRRIK. 2 consecutive short sequence motifs (nuclear localization signal) follow at residues 60–61 and 63–64; these read KK and RR. Positions 67 to 78 are enriched in basic and acidic residues; that stretch reads RDGPVRDEAAPV. Residues 86-87 carry the Nuclear localization signal 3 motif; it reads KR. Disordered stretches follow at residues 240 to 266 and 308 to 330; these read KEEV…NNNH and TDEL…TSSG. Basic and acidic residues predominate over residues 251-266; sequence NGNKEDDGESKKNNNH. Residues 308 to 319 show a composition bias toward polar residues; it reads TDELSSDQPSHQ. A coiled-coil region spans residues 331 to 375; that stretch reads SKALILKEKVKLLEHKLEEARAALEAKEARIQELENSKIESELEC. The KASH domain maps to 426–459; the sequence is KLGFYILTQLILLVSILRFLVLQFSPASRLVIPT. Residues 427 to 447 form a helical membrane-spanning segment; the sequence is LGFYILTQLILLVSILRFLVL.

In terms of assembly, component of Ran complexes at least composed of WIT1 or WIT2, RANGAP1 or RANGAP2, and WIP1 or WIP2 or WIP3. Interacts with RANGAP1, WPP1/MAF1, and WPP2/MAF2. Interacts with SUN1 and SUN2. Core component of the LINC complex which is composed of inner nuclear membrane SUN domain-containing proteins coupled to outer nuclear membrane WIP and WIT proteins. The LINC complex also involves nucleoskeletal proteins CRWN/LINC and possibly KAKU4 and the cytoskeletal myosin KAKU1. Interacts with WIT2. As to expression, expressed in seedlings, roots, stems, leaves, and flowers.

The protein resides in the nucleus envelope. It is found in the nucleus membrane. Its function is as follows. Mediates and enhances the nuclear envelope docking of RANGAP proteins mediated by WIT1 and WIT2 in the undifferentiated cells of root tips. As component of the SUN-WIP-WIT2-KAKU1 complex, mediates the transfer of cytoplasmic forces to the nuclear envelope (NE), leading to nuclear shape changes. This Arabidopsis thaliana (Mouse-ear cress) protein is WPP domain-interacting protein 3 (WIP3).